Consider the following 814-residue polypeptide: Acyl-coenzyme A dehydrogenase (814 aa).

Residue Glu-497 is the Proton acceptor of the active site.

It belongs to the acyl-CoA dehydrogenase family. FAD is required as a cofactor.

The enzyme catalyses a medium-chain 2,3-saturated fatty acyl-CoA + oxidized [electron-transfer flavoprotein] + H(+) = a medium-chain (2E)-enoyl-CoA + reduced [electron-transfer flavoprotein]. It catalyses the reaction a long-chain 2,3-saturated fatty acyl-CoA + oxidized [electron-transfer flavoprotein] + H(+) = a long-chain (2E)-enoyl-CoA + reduced [electron-transfer flavoprotein]. It functions in the pathway lipid metabolism; fatty acid beta-oxidation. In terms of biological role, catalyzes the dehydrogenation of acyl-coenzymes A (acyl-CoAs) to 2-enoyl-CoAs, the first step of the beta-oxidation cycle of fatty acid degradation. Is required for S.typhimurium to utilize medium- and long-chain fatty acids as sole carbon sources for growth. Is needed for bacterial survival during carbone-source starvation. This Salmonella typhimurium (strain LT2 / SGSC1412 / ATCC 700720) protein is Acyl-coenzyme A dehydrogenase (fadE).